A 363-amino-acid chain; its full sequence is DNA replication and repair protein RecF (363 aa).

30–37 (GDNAQGKT) contacts ATP.

Belongs to the RecF family.

It localises to the cytoplasm. Its function is as follows. The RecF protein is involved in DNA metabolism; it is required for DNA replication and normal SOS inducibility. RecF binds preferentially to single-stranded, linear DNA. It also seems to bind ATP. The polypeptide is DNA replication and repair protein RecF (Lachnospira eligens (strain ATCC 27750 / DSM 3376 / VPI C15-48 / C15-B4) (Eubacterium eligens)).